Here is a 634-residue protein sequence, read N- to C-terminus: 1-deoxy-D-xylulose-5-phosphate synthase (634 aa).

Residues histidine 74 and 115–117 (AHS) each bind thiamine diphosphate. Aspartate 146 contributes to the Mg(2+) binding site. Thiamine diphosphate contacts are provided by residues 147 to 148 (GA), asparagine 176, tyrosine 283, and glutamate 365. Asparagine 176 provides a ligand contact to Mg(2+).

The protein belongs to the transketolase family. DXPS subfamily. In terms of assembly, homodimer. It depends on Mg(2+) as a cofactor. Thiamine diphosphate is required as a cofactor.

The catalysed reaction is D-glyceraldehyde 3-phosphate + pyruvate + H(+) = 1-deoxy-D-xylulose 5-phosphate + CO2. Its pathway is metabolic intermediate biosynthesis; 1-deoxy-D-xylulose 5-phosphate biosynthesis; 1-deoxy-D-xylulose 5-phosphate from D-glyceraldehyde 3-phosphate and pyruvate: step 1/1. Catalyzes the acyloin condensation reaction between C atoms 2 and 3 of pyruvate and glyceraldehyde 3-phosphate to yield 1-deoxy-D-xylulose-5-phosphate (DXP). The polypeptide is 1-deoxy-D-xylulose-5-phosphate synthase (Burkholderia ambifaria (strain MC40-6)).